We begin with the raw amino-acid sequence, 138 residues long: Basic phospholipase A2 Cvv-N6 (138 aa).

A signal peptide spans 1–16 (MRTFWIVALLLVGVEG). Disulfide bonds link Cys42/Cys131, Cys44/Cys60, Cys59/Cys111, Cys65/Cys138, Cys66/Cys104, Cys73/Cys97, and Cys91/Cys102. Positions 43, 45, and 47 each coordinate Ca(2+). The active site involves His63. Position 64 (Asp64) interacts with Ca(2+). Residue Asp105 is part of the active site.

Belongs to the phospholipase A2 family. Group II subfamily. D49 sub-subfamily. Monomer. Binds to calmodulin. It depends on Ca(2+) as a cofactor. As to expression, expressed by the venom gland.

Its subcellular location is the secreted. The enzyme catalyses a 1,2-diacyl-sn-glycero-3-phosphocholine + H2O = a 1-acyl-sn-glycero-3-phosphocholine + a fatty acid + H(+). Its activity is regulated as follows. Heparin and wedelolactone inhibit the myotoxic activity. The PLA2 inhibitor, para-bromophenacyl bromide (BPB), inhibits enzymatic and myotoxic activities. In terms of biological role, snake venom phospholipase A2 (PLA2) that is myotoxic and displays moderate edema-inducing activity in rat paws. Does not show neurotoxic activity. PLA2 catalyzes the calcium-dependent hydrolysis of the 2-acyl groups in 3-sn-phosphoglycerides. The sequence is that of Basic phospholipase A2 Cvv-N6 from Crotalus viridis viridis (Prairie rattlesnake).